A 239-amino-acid chain; its full sequence is Norbelladine 4'-O-methyltransferase (239 aa).

Residues V55, E77, G79–V80, S85, D103, and A132 contribute to the S-adenosyl-L-methionine site. D155 contributes to the a divalent metal cation binding site. D157 contributes to the S-adenosyl-L-methionine binding site. A divalent metal cation contacts are provided by D181 and N182.

This sequence belongs to the class I-like SAM-binding methyltransferase superfamily. Cation-dependent O-methyltransferase family. Requires Mg(2+) as cofactor. In terms of tissue distribution, highly expressed in bulbs. Detected in leaves and inflorescences.

The enzyme catalyses norbelladine + S-adenosyl-L-methionine = 4'-O-methylnorbelladine + S-adenosyl-L-homocysteine + H(+). Its pathway is alkaloid biosynthesis. Functionally, 4'-O-methyltransferase converting norbelladine to 4'-O-methylnorbelladine. 4'-O-methylnorbelladine is a precursor to all Amaryllidaceae alkaloids such as galanthamine, lycorine and haemanthamine, and including haemanthamine- and crinamine-type alkaloids, promising anticancer agents. Can use norbelladine, N-methylnorbelladine and dopamine as substrate, but not caffeic acid, vanillin, 3,4-dihydroxybenzaldehyde and tyramine. This Narcissus aff. pseudonarcissus MK-2014 (Daffodil) protein is Norbelladine 4'-O-methyltransferase.